A 365-amino-acid chain; its full sequence is 3-isopropylmalate dehydrogenase (365 aa).

78-91 (GYKWDSLPRSQRPE) is a binding site for NAD(+). The substrate site is built by Arg98, Arg108, Arg136, and Asp226. Positions 226, 250, and 254 each coordinate Mg(2+). Residue 284–296 (GSAPDIAGQDKAN) coordinates NAD(+).

This sequence belongs to the isocitrate and isopropylmalate dehydrogenases family. LeuB type 1 subfamily. Homodimer. It depends on Mg(2+) as a cofactor. Requires Mn(2+) as cofactor.

Its subcellular location is the cytoplasm. The catalysed reaction is (2R,3S)-3-isopropylmalate + NAD(+) = 4-methyl-2-oxopentanoate + CO2 + NADH. It participates in amino-acid biosynthesis; L-leucine biosynthesis; L-leucine from 3-methyl-2-oxobutanoate: step 3/4. In terms of biological role, catalyzes the oxidation of 3-carboxy-2-hydroxy-4-methylpentanoate (3-isopropylmalate) to 3-carboxy-4-methyl-2-oxopentanoate. The product decarboxylates to 4-methyl-2 oxopentanoate. This Synechococcus elongatus (strain ATCC 33912 / PCC 7942 / FACHB-805) (Anacystis nidulans R2) protein is 3-isopropylmalate dehydrogenase.